The following is a 215-amino-acid chain: Glutathione S-transferase-like protein (215 aa).

The region spanning 1 to 76 (MPNARILKIQ…YVAASGPAAP (76 aa)) is the GST N-terminal domain. The region spanning 82-215 (NVAEQAAVRQ…LVAVRKEASV (134 aa)) is the GST C-terminal domain.

Belongs to the GST superfamily.

The sequence is that of Glutathione S-transferase-like protein from Aspergillus aculeatus (strain ATCC 16872 / CBS 172.66 / WB 5094).